The following is a 426-amino-acid chain: Histidine--tRNA ligase (426 aa).

This sequence belongs to the class-II aminoacyl-tRNA synthetase family. Homodimer.

It localises to the cytoplasm. It catalyses the reaction tRNA(His) + L-histidine + ATP = L-histidyl-tRNA(His) + AMP + diphosphate + H(+). This chain is Histidine--tRNA ligase, found in Picosynechococcus sp. (strain ATCC 27264 / PCC 7002 / PR-6) (Agmenellum quadruplicatum).